Reading from the N-terminus, the 365-residue chain is 2-aminoethylphosphonate--pyruvate transaminase (365 aa).

Lys-194 is subject to N6-(pyridoxal phosphate)lysine.

The protein belongs to the class-V pyridoxal-phosphate-dependent aminotransferase family. PhnW subfamily. In terms of assembly, homodimer. The cofactor is pyridoxal 5'-phosphate.

It carries out the reaction (2-aminoethyl)phosphonate + pyruvate = phosphonoacetaldehyde + L-alanine. Functionally, involved in phosphonate degradation. This Bacillus cereus (strain ZK / E33L) protein is 2-aminoethylphosphonate--pyruvate transaminase.